Consider the following 783-residue polypeptide: Tricorn protease-interacting factor F2 (783 aa).

Substrate is bound by residues Glu107 and 236–240 (GAMEN). A Zn(2+)-binding site is contributed by His271. Glu272 serves as the catalytic Proton acceptor. His275 and Glu294 together coordinate Zn(2+).

It belongs to the peptidase M1 family. In terms of assembly, monomer. Part of the Tricorn proteolytic complex. It depends on Zn(2+) as a cofactor.

The protein localises to the cytoplasm. Functionally, proteases F1, F2 and F3 degrade oligopeptides produced by Tricorn (themselves probably produced by the proteasome), yielding free amino acids. The polypeptide is Tricorn protease-interacting factor F2 (trf2) (Thermoplasma acidophilum (strain ATCC 25905 / DSM 1728 / JCM 9062 / NBRC 15155 / AMRC-C165)).